The primary structure comprises 65 residues: Large ribosomal subunit protein bL35 (65 aa).

Residues 28 to 53 form a disordered region; it reads NGSHNLEKKNRKRTRRLHQSTMLDNA. Residues 36–45 are compositionally biased toward basic residues; that stretch reads KNRKRTRRLH.

This sequence belongs to the bacterial ribosomal protein bL35 family.

The protein is Large ribosomal subunit protein bL35 of Chlorobium luteolum (strain DSM 273 / BCRC 81028 / 2530) (Pelodictyon luteolum).